The primary structure comprises 523 residues: ATP-dependent RNA helicase DBP3 (523 aa).

A compositionally biased stretch (basic and acidic residues) spans 1 to 21; sequence MTKEEIADKKRKVVDEEVIEK. The segment at 1–71 is disordered; that stretch reads MTKEEIADKK…SEKKPEPTSA (71 aa). Over residues 22-48 the composition is skewed to basic residues; it reads KKSKKHKKDKKDKKEKKDKKHKKHKKE. The span at 49 to 67 shows a compositional bias: basic and acidic residues; sequence KKGEKEVEVPEKESEKKPE. Positions 114–140 match the Q motif motif; that stretch reads LSFDYLSLDSSIQAEISKFPKPTPIQA. A Helicase ATP-binding domain is found at 143-315; sequence WPYLLSGKDV…STFMNNPIKV (173 aa). Residue 156 to 163 participates in ATP binding; sequence AETGSGKT. Residues 262-265 carry the DEAD box motif; the sequence is DEAD. A Helicase C-terminal domain is found at 344-493; the sequence is KLLELLKKYH…PVPEDLIKFG (150 aa).

Belongs to the DEAD box helicase family. DDX5/DBP2 subfamily.

The protein localises to the nucleus. It localises to the nucleolus. It carries out the reaction ATP + H2O = ADP + phosphate + H(+). Functionally, ATP-dependent RNA helicase required for 60S ribosomal subunit synthesis. Involved in efficient pre-rRNA processing, predominantly at site A3, which is necessary for the normal formation of 25S and 5.8S rRNAs. In Saccharomyces cerevisiae (strain ATCC 204508 / S288c) (Baker's yeast), this protein is ATP-dependent RNA helicase DBP3 (DBP3).